Consider the following 211-residue polypeptide: Small ribosomal subunit protein eS1 (211 aa).

The interval 192–211 (NGLPPYEAVGDRATPELASY) is disordered.

It belongs to the eukaryotic ribosomal protein eS1 family.

The chain is Small ribosomal subunit protein eS1 from Methanopyrus kandleri (strain AV19 / DSM 6324 / JCM 9639 / NBRC 100938).